We begin with the raw amino-acid sequence, 347 residues long: Queuosine 5'-phosphate N-glycosylase/hydrolase (347 aa).

Queuine is bound by residues His-53, Phe-237, Asp-239, Asp-321, and Asp-326. The active-site Nucleophile or transition state stabilizer is Asp-239.

This sequence belongs to the QNG1 protein family.

The catalysed reaction is queuosine 5'-phosphate + H2O = queuine + D-ribose 5-phosphate. Functionally, catalyzes the hydrolysis of queuosine 5'-phosphate, releasing the nucleobase queuine (q). Is required for salvage of queuine from exogenous queuosine (Q) that is imported and then converted to queuosine 5'-phosphate intracellularly. The sequence is that of Queuosine 5'-phosphate N-glycosylase/hydrolase from Nematostella vectensis (Starlet sea anemone).